Consider the following 633-residue polypeptide: Extracellular metalloproteinase 5 (633 aa).

Positions 1-21 (MHGLLLAAAGLLSLPLHVIAH) are cleaved as a signal peptide. A propeptide spanning residues 22 to 245 (PQPSTNLAGR…HNVVDYVSHA (224 aa)) is cleaved from the precursor. A glycan (N-linked (GlcNAc...) asparagine) is linked at asparagine 286. Zn(2+) is bound at residue histidine 428. The active site involves glutamate 429. Zn(2+) is bound at residue histidine 432. N-linked (GlcNAc...) asparagine glycans are attached at residues asparagine 592 and asparagine 621.

The protein belongs to the peptidase M36 family. It depends on Zn(2+) as a cofactor.

The protein localises to the secreted. In terms of biological role, secreted metalloproteinase probably acting as a virulence factor. This Arthroderma benhamiae (Trichophyton mentagrophytes) protein is Extracellular metalloproteinase 5 (MEP5).